The following is a 726-amino-acid chain: MSTTDDTHNTLSTGKCPFHQGGHDRSAGAGTASRDWWPNQLRVDLLNQHSNRSNPLGEDFDYRKEFSKLDYSALKGDLKALLTDSQPWWPADWGSYVGLFIRMAWHGAGTYRSIDGRGGAGRGQQRFAPLNSWPDNVSLDKARRLLWPIKQKYGQKISWADLFILAGNVALENSGFRTFGFGAGREDVWEPDLDVNWGDEKAWLTHRHPEALAKAPLGATEMGLIYVNPEGPDHSGEPLSAAAAIRATFGNMGMNDEETVALIAGGHTLGKTHGAAAASHVGADPEAAPIEAQGLGWASSYGSGVGADAITSGLEVVWTQTPTQWSNYFFENLFKYEWVQTRSPAGAIQFEAVDAPDIIPDPFDPSKKRKPTMLVTDLTLRFDPEFEKISRRFLNDPQAFNEAFARAWFKLTHRDMGPKARYIGPEVPKEDLIWQDPLPQPLYQPTQEDIINLKAAIAASGLSISEMVSVAWASASTFRGGDKRGGANGARLALAPQRDWDVNAVAARVLPVLEEIQKTTNKASLADIIVLAGVVGIEQAAAAAGVSISVPFAPGRVDARQDQTDIEMFSLLEPIADGFRNYRARLDVSTTESLLIDKAQQLTLTAPEMTVLVGGMRVLGTNFDGSQNGVFTDRPGVLSTDFFANLLDMRYEWKPTDDANELFEGRDRLTGEVKYTATRADLVFGSNSVLRALAEVYACSDAHEKFVKDFVAAWVKVMNLDRFDLQ.

The segment at 1-33 (MSTTDDTHNTLSTGKCPFHQGGHDRSAGAGTAS) is disordered. A cross-link (tryptophyl-tyrosyl-methioninium (Trp-Tyr) (with M-252)) is located at residues 105–226 (WHGAGTYRSI…LGATEMGLIY (122 aa)). The active-site Proton acceptor is the His106. A cross-link (tryptophyl-tyrosyl-methioninium (Tyr-Met) (with W-105)) is located at residues 226 to 252 (YVNPEGPDHSGEPLSAAAAIRATFGNM). His267 is a binding site for heme b.

It belongs to the peroxidase family. Peroxidase/catalase subfamily. Homodimer or homotetramer. Requires heme b as cofactor. Formation of the three residue Trp-Tyr-Met cross-link is important for the catalase, but not the peroxidase activity of the enzyme.

It carries out the reaction H2O2 + AH2 = A + 2 H2O. The catalysed reaction is 2 H2O2 = O2 + 2 H2O. Bifunctional enzyme with both catalase and broad-spectrum peroxidase activity. This chain is Catalase-peroxidase, found in Salmonella heidelberg (strain SL476).